A 165-amino-acid polypeptide reads, in one-letter code: Large ribosomal subunit protein uL11 (165 aa).

Residue Ser38 is modified to Phosphoserine. Lys40 is covalently cross-linked (Glycyl lysine isopeptide (Lys-Gly) (interchain with G-Cter in SUMO2)). A Glycyl lysine isopeptide (Lys-Gly) (interchain with G-Cter in ubiquitin) cross-link involves residue Lys48. An N6-acetyllysine modification is found at Lys54. Lys83 is covalently cross-linked (Glycyl lysine isopeptide (Lys-Gly) (interchain with G-Cter in ubiquitin)). The residue at position 165 (Ser165) is a Phosphoserine.

The protein belongs to the universal ribosomal protein uL11 family. In terms of assembly, component of the large ribosomal subunit. Mature ribosomes consist of a small (40S) and a large (60S) subunit. The 40S subunit contains about 33 different proteins and 1 molecule of RNA (18S). The 60S subunit contains about 49 different proteins and 3 molecules of RNA (28S, 5.8S and 5S). Post-translationally, ubiquitinated at Lys-48 and Lys-83 by RNF14 and RNF25 in response to ribosome collisions (ribosome stalling).

It localises to the cytoplasm. Component of the large ribosomal subunit. The ribosome is a large ribonucleoprotein complex responsible for the synthesis of proteins in the cell. Binds directly to 26S ribosomal RNA. In Bos taurus (Bovine), this protein is Large ribosomal subunit protein uL11 (RPL12).